The primary structure comprises 464 residues: Putative protein TIC 214 C-terminal part (464 aa).

This sequence belongs to the TIC214 family. Part of the Tic complex.

The protein localises to the plastid. It localises to the chloroplast. In terms of biological role, involved in protein precursor import into chloroplasts. May be part of an intermediate translocation complex acting as a protein-conducting channel at the inner envelope. The polypeptide is Putative protein TIC 214 C-terminal part (Marchantia polymorpha (Common liverwort)).